A 223-amino-acid polypeptide reads, in one-letter code: Cytidylate kinase (223 aa).

10-18 contributes to the ATP binding site; sequence GPAGAGKST.

Belongs to the cytidylate kinase family. Type 1 subfamily.

The protein resides in the cytoplasm. The enzyme catalyses CMP + ATP = CDP + ADP. It catalyses the reaction dCMP + ATP = dCDP + ADP. The polypeptide is Cytidylate kinase (Exiguobacterium sibiricum (strain DSM 17290 / CCUG 55495 / CIP 109462 / JCM 13490 / 255-15)).